Consider the following 316-residue polypeptide: Methionyl-tRNA formyltransferase (316 aa).

Residue 108–111 (SLLP) coordinates (6S)-5,6,7,8-tetrahydrofolate.

Belongs to the Fmt family.

The enzyme catalyses L-methionyl-tRNA(fMet) + (6R)-10-formyltetrahydrofolate = N-formyl-L-methionyl-tRNA(fMet) + (6S)-5,6,7,8-tetrahydrofolate + H(+). Its function is as follows. Attaches a formyl group to the free amino group of methionyl-tRNA(fMet). The formyl group appears to play a dual role in the initiator identity of N-formylmethionyl-tRNA by promoting its recognition by IF2 and preventing the misappropriation of this tRNA by the elongation apparatus. This Heliobacterium modesticaldum (strain ATCC 51547 / Ice1) protein is Methionyl-tRNA formyltransferase.